The primary structure comprises 417 residues: D-amino acid dehydrogenase (417 aa).

3-17 (IIVLGAGVIGVTSAY) lines the FAD pocket.

It belongs to the DadA oxidoreductase family. Requires FAD as cofactor.

It carries out the reaction a D-alpha-amino acid + A + H2O = a 2-oxocarboxylate + AH2 + NH4(+). Its pathway is amino-acid degradation; D-alanine degradation; NH(3) and pyruvate from D-alanine: step 1/1. Its function is as follows. Oxidative deamination of D-amino acids. The chain is D-amino acid dehydrogenase from Azorhizobium caulinodans (strain ATCC 43989 / DSM 5975 / JCM 20966 / LMG 6465 / NBRC 14845 / NCIMB 13405 / ORS 571).